A 151-amino-acid chain; its full sequence is MGRMHSAGKGISSSAIPYSRNAPAWFKLSSESVIEQIVKYARKGLTPSQIGVLLRDAHGVTQARVITGNKIMRILKSNGLAPEIPEDLYYLIKKAVSVRKHLERNRKDKDAKFRLILIESRIHRLARYYRTVAVLPPNWKYESATASALVN.

Ser32 is subject to Phosphoserine. Residues Lys39 and Lys43 each participate in a glycyl lysine isopeptide (Lys-Gly) (interchain with G-Cter in ubiquitin) cross-link.

The protein belongs to the universal ribosomal protein uS15 family. Component of the small ribosomal subunit (SSU). Mature yeast ribosomes consist of a small (40S) and a large (60S) subunit. The 40S small subunit contains 1 molecule of ribosomal RNA (18S rRNA) and 33 different proteins (encoded by 57 genes). The large 60S subunit contains 3 rRNA molecules (25S, 5.8S and 5S rRNA) and 46 different proteins (encoded by 81 genes).

The protein resides in the cytoplasm. Its function is as follows. Component of the ribosome, a large ribonucleoprotein complex responsible for the synthesis of proteins in the cell. The small ribosomal subunit (SSU) binds messenger RNAs (mRNAs) and translates the encoded message by selecting cognate aminoacyl-transfer RNA (tRNA) molecules. The large subunit (LSU) contains the ribosomal catalytic site termed the peptidyl transferase center (PTC), which catalyzes the formation of peptide bonds, thereby polymerizing the amino acids delivered by tRNAs into a polypeptide chain. The nascent polypeptides leave the ribosome through a tunnel in the LSU and interact with protein factors that function in enzymatic processing, targeting, and the membrane insertion of nascent chains at the exit of the ribosomal tunnel. The chain is Small ribosomal subunit protein uS15 from Saccharomyces cerevisiae (strain ATCC 204508 / S288c) (Baker's yeast).